A 258-amino-acid chain; its full sequence is Tryptophan synthase alpha chain (258 aa).

Active-site proton acceptor residues include glutamate 52 and aspartate 63.

The protein belongs to the TrpA family. Tetramer of two alpha and two beta chains.

It catalyses the reaction (1S,2R)-1-C-(indol-3-yl)glycerol 3-phosphate + L-serine = D-glyceraldehyde 3-phosphate + L-tryptophan + H2O. It participates in amino-acid biosynthesis; L-tryptophan biosynthesis; L-tryptophan from chorismate: step 5/5. Its function is as follows. The alpha subunit is responsible for the aldol cleavage of indoleglycerol phosphate to indole and glyceraldehyde 3-phosphate. The protein is Tryptophan synthase alpha chain of Streptococcus pneumoniae serotype 4 (strain ATCC BAA-334 / TIGR4).